The following is a 355-amino-acid chain: tRNA-specific 2-thiouridylase MnmA (355 aa).

Residues 8–15 and Met34 contribute to the ATP site; that span reads GMSGGVDS. Cys103 functions as the Nucleophile in the catalytic mechanism. A disulfide bridge connects residues Cys103 and Cys199. Gly127 serves as a coordination point for ATP. The tract at residues 149–151 is interaction with tRNA; the sequence is KDQ. The active-site Cysteine persulfide intermediate is the Cys199. An interaction with tRNA region spans residues 305 to 306; that stretch reads RY.

This sequence belongs to the MnmA/TRMU family.

It is found in the cytoplasm. The catalysed reaction is S-sulfanyl-L-cysteinyl-[protein] + uridine(34) in tRNA + AH2 + ATP = 2-thiouridine(34) in tRNA + L-cysteinyl-[protein] + A + AMP + diphosphate + H(+). In terms of biological role, catalyzes the 2-thiolation of uridine at the wobble position (U34) of tRNA, leading to the formation of s(2)U34. The sequence is that of tRNA-specific 2-thiouridylase MnmA from Clostridium acetobutylicum (strain ATCC 824 / DSM 792 / JCM 1419 / IAM 19013 / LMG 5710 / NBRC 13948 / NRRL B-527 / VKM B-1787 / 2291 / W).